The following is a 196-amino-acid chain: Small ribosomal subunit protein uS4c (196 aa).

The interval 16-36 is disordered; sequence GALPGLTRKTPKSGSNLKKKF. Positions 89–169 constitute an S4 RNA-binding domain; the sequence is MRLDNILFRL…LPKHLTIDTL (81 aa).

This sequence belongs to the universal ribosomal protein uS4 family. Part of the 30S ribosomal subunit. Contacts protein S5. The interaction surface between S4 and S5 is involved in control of translational fidelity.

The protein localises to the plastid. The protein resides in the chloroplast. Its function is as follows. One of the primary rRNA binding proteins, it binds directly to 16S rRNA where it nucleates assembly of the body of the 30S subunit. In terms of biological role, with S5 and S12 plays an important role in translational accuracy. This is Small ribosomal subunit protein uS4c (rps4) from Cinna latifolia (Drooping woodreed).